The primary structure comprises 258 residues: Hydroxyacylglutathione hydrolase (258 aa).

Zn(2+) contacts are provided by histidine 55, histidine 57, aspartate 59, histidine 60, histidine 115, aspartate 132, and histidine 170.

This sequence belongs to the metallo-beta-lactamase superfamily. Glyoxalase II family. Monomer. Requires Zn(2+) as cofactor.

It catalyses the reaction an S-(2-hydroxyacyl)glutathione + H2O = a 2-hydroxy carboxylate + glutathione + H(+). It functions in the pathway secondary metabolite metabolism; methylglyoxal degradation; (R)-lactate from methylglyoxal: step 2/2. Its function is as follows. Thiolesterase that catalyzes the hydrolysis of S-D-lactoyl-glutathione to form glutathione and D-lactic acid. This Shewanella denitrificans (strain OS217 / ATCC BAA-1090 / DSM 15013) protein is Hydroxyacylglutathione hydrolase.